The sequence spans 244 residues: Fumarate reductase iron-sulfur subunit (244 aa).

Tyr-14 is a binding site for a menaquinone. The region spanning 16 to 97 is the 2Fe-2S ferredoxin-type domain; sequence PEVDTAPHSA…GMKVEALANF (82 aa). The [2Fe-2S] cluster site is built by Cys-58, Cys-63, Cys-66, and Cys-78. The 4Fe-4S ferredoxin-type domain maps to 140 to 169; that stretch reads MAKYHQFSGCINCGLCYAACPQFGLNPEFI. Residues Cys-149, Cys-152, and Cys-155 each coordinate [4Fe-4S] cluster. Positions 159, 205, and 211 each coordinate [3Fe-4S] cluster. Cys-215 contributes to the [4Fe-4S] cluster binding site. 226–229 is an a menaquinone binding site; the sequence is QQGK.

Belongs to the succinate dehydrogenase/fumarate reductase iron-sulfur protein family. As to quaternary structure, fumarate dehydrogenase forms part of an enzyme complex containing four subunits: a flavoprotein, an iron-sulfur, and two hydrophobic anchor proteins. [2Fe-2S] cluster is required as a cofactor. It depends on [3Fe-4S] cluster as a cofactor. The cofactor is [4Fe-4S] cluster.

The protein resides in the cell inner membrane. The catalysed reaction is a quinone + succinate = fumarate + a quinol. It carries out the reaction a menaquinone + succinate = a menaquinol + fumarate. In terms of biological role, two distinct, membrane-bound, FAD-containing enzymes are responsible for the catalysis of fumarate and succinate interconversion; the fumarate reductase is used in anaerobic growth, and the succinate dehydrogenase is used in aerobic growth. The chain is Fumarate reductase iron-sulfur subunit (frdB) from Escherichia coli O157:H7.